The following is a 102-amino-acid chain: Large ribosomal subunit protein bL21 (102 aa).

It belongs to the bacterial ribosomal protein bL21 family. As to quaternary structure, part of the 50S ribosomal subunit. Contacts protein L20.

This protein binds to 23S rRNA in the presence of protein L20. This chain is Large ribosomal subunit protein bL21, found in Onion yellows phytoplasma (strain OY-M).